The primary structure comprises 305 residues: Ribonuclease BN (305 aa).

The Zn(2+) site is built by histidine 64, histidine 66, aspartate 68, histidine 69, histidine 141, aspartate 212, and histidine 270. Residue aspartate 68 is the Proton acceptor of the active site.

Belongs to the RNase Z family. RNase BN subfamily. As to quaternary structure, homodimer. Requires Zn(2+) as cofactor.

Functionally, zinc phosphodiesterase, which has both exoribonuclease and endoribonuclease activities. In Escherichia coli O7:K1 (strain IAI39 / ExPEC), this protein is Ribonuclease BN.